Reading from the N-terminus, the 419-residue chain is MDKILVRGGNTLKGTIPISGAKNACLPELAATLLTEDTVTLRNVPHLRDVTTMLELLGQHGAAITIDEKLGVSIDCKSIQNTMAPYDLVRTMRASVLVMGPLVARCGHAEISLPGGCAIGSRPINLHLRGLEMMGAHVTLEDGYVRIKAGRLKGAHIVFDLVTVTGTENLLMAATLADGITILDNAAAEPEVVDLANLLMAMGAKIDGAGTRTITIEGVKNLHGTSHDILPDRIETGTFMVAAAVTGGDITMTGTYPALLEAHIAKMREAGCQIDEMDRAIRVRAEAGTLRAVDITTLPHPGFPTDLQAQMMVLLTVAKGAAQIKETIFENRFMHVSELQRMGADITVQGNTAIVRGVPQLRGAPVMATDLRASASLVLAGLCAEGETLISRVYHIDRGYERIEEKLKALGADIQRLGR.

Residue 22–23 coordinates phosphoenolpyruvate; sequence KN. Residue arginine 93 coordinates UDP-N-acetyl-alpha-D-glucosamine. Cysteine 117 functions as the Proton donor in the catalytic mechanism. Cysteine 117 is subject to 2-(S-cysteinyl)pyruvic acid O-phosphothioketal. The UDP-N-acetyl-alpha-D-glucosamine site is built by aspartate 306 and isoleucine 328.

The protein belongs to the EPSP synthase family. MurA subfamily.

It is found in the cytoplasm. The catalysed reaction is phosphoenolpyruvate + UDP-N-acetyl-alpha-D-glucosamine = UDP-N-acetyl-3-O-(1-carboxyvinyl)-alpha-D-glucosamine + phosphate. It functions in the pathway cell wall biogenesis; peptidoglycan biosynthesis. Cell wall formation. Adds enolpyruvyl to UDP-N-acetylglucosamine. This Magnetococcus marinus (strain ATCC BAA-1437 / JCM 17883 / MC-1) protein is UDP-N-acetylglucosamine 1-carboxyvinyltransferase.